A 200-amino-acid chain; its full sequence is Snake venom metalloproteinase rhomb-I (200 aa).

Residues 4 to 200 (KYIELVVVAD…RKPQCILNKP (197 aa)) form the Peptidase M12B domain. Glutamate 7 and aspartate 91 together coordinate Ca(2+). Disulfide bonds link cysteine 115/cysteine 195, cysteine 155/cysteine 179, and cysteine 157/cysteine 162. Histidine 140 lines the Zn(2+) pocket. Glutamate 141 is a catalytic residue. Residues histidine 144 and histidine 150 each contribute to the Zn(2+) site. Ca(2+) is bound by residues cysteine 195 and asparagine 198.

In terms of assembly, monomer. It depends on Zn(2+) as a cofactor. As to expression, expressed by the venom gland.

The protein localises to the secreted. Functionally, snake venom zinc metalloproteinase that induces hemorrhage. This Lachesis muta rhombeata (Bushmaster) protein is Snake venom metalloproteinase rhomb-I.